The following is a 960-amino-acid chain: Phosphoenolpyruvate carboxylase 3 (960 aa).

A Phosphoserine modification is found at Ser8. Active-site residues include His167 and Lys597.

Belongs to the PEPCase type 1 family. In terms of assembly, homotetramer. Requires Mg(2+) as cofactor.

The protein resides in the cytoplasm. The catalysed reaction is oxaloacetate + phosphate = phosphoenolpyruvate + hydrogencarbonate. It participates in photosynthesis; C4 acid pathway. Its activity is regulated as follows. By light-reversible phosphorylation. In terms of biological role, through the carboxylation of phosphoenolpyruvate (PEP) it forms oxaloacetate, a four-carbon dicarboxylic acid source for the tricarboxylic acid cycle. In Sorghum bicolor (Sorghum), this protein is Phosphoenolpyruvate carboxylase 3.